An 809-amino-acid chain; its full sequence is Lon protease (809 aa).

Residues 8-203 (LPVVALRNMA…RLCLILADEI (196 aa)) form the Lon N-terminal domain. 354–361 (GPPGTGKT) is an ATP binding site. The Lon proteolytic domain occupies 629 to 809 (KDEVGIVCGL…MDEVLKHALV (181 aa)). Catalysis depends on residues serine 716 and lysine 759.

It belongs to the peptidase S16 family. In terms of assembly, homohexamer. Organized in a ring with a central cavity.

The protein localises to the cytoplasm. The enzyme catalyses Hydrolysis of proteins in presence of ATP.. Functionally, ATP-dependent serine protease that mediates the selective degradation of mutant and abnormal proteins as well as certain short-lived regulatory proteins. Required for cellular homeostasis and for survival from DNA damage and developmental changes induced by stress. Degrades polypeptides processively to yield small peptide fragments that are 5 to 10 amino acids long. Binds to DNA in a double-stranded, site-specific manner. The protein is Lon protease of Lachnoclostridium phytofermentans (strain ATCC 700394 / DSM 18823 / ISDg) (Clostridium phytofermentans).